A 466-amino-acid polypeptide reads, in one-letter code: 3-isopropylmalate dehydratase large subunit (466 aa).

[4Fe-4S] cluster is bound by residues Cys-347, Cys-407, and Cys-410.

Belongs to the aconitase/IPM isomerase family. LeuC type 1 subfamily. In terms of assembly, heterodimer of LeuC and LeuD. The cofactor is [4Fe-4S] cluster.

It carries out the reaction (2R,3S)-3-isopropylmalate = (2S)-2-isopropylmalate. It participates in amino-acid biosynthesis; L-leucine biosynthesis; L-leucine from 3-methyl-2-oxobutanoate: step 2/4. Catalyzes the isomerization between 2-isopropylmalate and 3-isopropylmalate, via the formation of 2-isopropylmaleate. In Escherichia coli O9:H4 (strain HS), this protein is 3-isopropylmalate dehydratase large subunit.